Consider the following 95-residue polypeptide: Large ribosomal subunit protein uL23 (95 aa).

The protein belongs to the universal ribosomal protein uL23 family. In terms of assembly, part of the 50S ribosomal subunit. Contacts protein L29, and trigger factor when it is bound to the ribosome.

One of the early assembly proteins it binds 23S rRNA. One of the proteins that surrounds the polypeptide exit tunnel on the outside of the ribosome. Forms the main docking site for trigger factor binding to the ribosome. This is Large ribosomal subunit protein uL23 from Geobacillus thermodenitrificans (strain NG80-2).